Here is a 254-residue protein sequence, read N- to C-terminus: Low affinity immunoglobulin gamma Fc region receptor III-A (254 aa).

Positions 1 to 20 are cleaved as a signal peptide; sequence MWQLLLPTALLLLVSAGMRA. 2 consecutive Ig-like C2-type domains span residues 24–105 and 107–189; these read PKAV…LEVH and GWLL…VNIT. 2 cysteine pairs are disulfide-bonded: Cys-47/Cys-89 and Cys-128/Cys-172. Asn-187 is a glycosylation site (N-linked (GlcNAc...) asparagine). Residues 207 to 229 traverse the membrane as a helical segment; sequence YQVSFCLVMVLLFAVDTGLYFSV. The disordered stretch occupies residues 234–254; the sequence is PSSTSDWKDHKFKWSKDPQDK. A compositionally biased stretch (basic and acidic residues) spans 239 to 254; that stretch reads DWKDHKFKWSKDPQDK.

As to quaternary structure, forms a heterooligomeric complex with ITAM-containing signaling subunits, either a homodimer of CD247, a homodimer of FCER1G or a heterodimer of CD247 and FCER1G, to form a functional receptor complex. Interacts (via transmembrane domain) with signaling subunits; this interaction is a prerequisite for receptor complex expression on the cell surface and intracellular signal transduction. Binds the Fc region of antigen-complexed IgG with a preference for IgG1 and IgG3 isotypes. Interacts with CD2; this interaction is involved in NK cell activation and cytotoxicity. Interacts with S100A4; this interaction inhibits PKC-dependent phosphorylation of FCGR3A. Glycosylated. Glycosylation plays an inhibitory role in the interaction with IgG1 and IgG2. In terms of processing, undergoes rapid ectodomain shedding upon NK cell stimulation. The soluble form is produced by a proteolytic cleavage mediated by ADAM17. Repeated stimulation causes receptor shedding, a mechanism that allows for increased NK cell motility and detachment from opsonized target cells while avoiding activation-induced NK cell apoptosis. As to expression, lymphocytes and monocytes.

The protein localises to the cell membrane. It is found in the secreted. In terms of biological role, receptor for the invariable Fc fragment of immunoglobulin gamma (IgG). Optimally activated upon binding of clustered antigen-IgG complexes displayed on cell surfaces, triggers lysis of antibody-coated cells, a process known as antibody-dependent cellular cytotoxicity (ADCC). Does not bind free monomeric IgG, thus avoiding inappropriate effector cell activation in the absence of antigenic trigger. Mediates IgG effector functions on natural killer (NK) cells. Binds antigen-IgG complexes generated upon infection and triggers NK cell-dependent cytokine production and degranulation to limit viral load and propagation. Involved in the generation of memory-like adaptive NK cells capable to produce high amounts of IFNG and to efficiently eliminate virus-infected cells via ADCC. Regulates NK cell survival and proliferation, in particular by preventing NK cell progenitor apoptosis. Fc-binding subunit that associates with CD247 and/or FCER1G adapters to form functional signaling complexes. Following the engagement of antigen-IgG complexes, triggers phosphorylation of immunoreceptor tyrosine-based activation motif (ITAM)-containing adapters with subsequent activation of phosphatidylinositol 3-kinase signaling and sustained elevation of intracellular calcium that ultimately drive NK cell activation. The ITAM-dependent signaling coupled to receptor phosphorylation by PKC mediates robust intracellular calcium flux that leads to production of pro-inflammatory cytokines, whereas in the absence of receptor phosphorylation it mainly activates phosphatidylinositol 3-kinase signaling leading to cell degranulation. Costimulates NK cells and trigger lysis of target cells independently of IgG binding. Mediates the antitumor activities of therapeutic antibodies. Upon ligation on monocytes triggers TNFA-dependent ADCC of IgG-coated tumor cells. Mediates enhanced ADCC in response to afucosylated IgGs. This is Low affinity immunoglobulin gamma Fc region receptor III-A (FCGR3A) from Papio anubis (Olive baboon).